A 496-amino-acid chain; its full sequence is Alpha-amylase (496 aa).

Cysteines 29 and 85 form a disulfide. The Ca(2+) site is built by asparagine 99, arginine 155, and aspartate 164. Arginine 192 is a binding site for chloride. Aspartate 194 (nucleophile) is an active-site residue. A Ca(2+)-binding site is contributed by histidine 198. Glutamate 230 functions as the Proton donor in the catalytic mechanism. Arginine 332 is a chloride binding site. Cystine bridges form between cysteine 374–cysteine 380 and cysteine 448–cysteine 460.

Belongs to the glycosyl hydrolase 13 family. In terms of assembly, monomer. Ca(2+) is required as a cofactor. The cofactor is chloride. Post-translationally, disulfide bonds are present.

It localises to the secreted. The enzyme catalyses Endohydrolysis of (1-&gt;4)-alpha-D-glucosidic linkages in polysaccharides containing three or more (1-&gt;4)-alpha-linked D-glucose units.. Its activity is regulated as follows. Inhibited by alpha-amylase inhibitors from wheat and rye. The most effective inhibitors are the wheat tetrameric alpha-amylase inhibitor (WTAI) and the rye dimeric alpha-amylase inhibitor (RDAI-1). Not inhibited by alpha-amylase inhibitor from barley. In terms of biological role, aids in the digestion of starch and glycogen derived from food, such as skin scales, fungi and bacteria. The sequence is that of Alpha-amylase from Dermatophagoides pteronyssinus (European house dust mite).